We begin with the raw amino-acid sequence, 232 residues long: MINDRVIVPLDVPTLEEAIALLDLLPRVSFWKVGLELFVSAGPSILEILKEREKRIFLDLKFHDIPNTVAGACRSATKYGVDLLTLHATAGRKALSQAVEAISTGDKPPKLLAISLLTSINSRELAFDLKIPLELPEYALQMALLAQETGIDGAVCSPQEVSQLRQVCGSDFLLVCPGVRPTWAEAGDQRRVMTPVSAIKAGADYLVIGRPITTASNPVEAWEKVCQELAEV.

Substrate-binding positions include D11, K32, D59–T68, T118, R180, Q189, G209, and R210. The Proton donor role is filled by K61.

The protein belongs to the OMP decarboxylase family. Type 1 subfamily. As to quaternary structure, homodimer.

The enzyme catalyses orotidine 5'-phosphate + H(+) = UMP + CO2. It participates in pyrimidine metabolism; UMP biosynthesis via de novo pathway; UMP from orotate: step 2/2. Catalyzes the decarboxylation of orotidine 5'-monophosphate (OMP) to uridine 5'-monophosphate (UMP). In Gloeothece citriformis (strain PCC 7424) (Cyanothece sp. (strain PCC 7424)), this protein is Orotidine 5'-phosphate decarboxylase.